Here is a 240-residue protein sequence, read N- to C-terminus: Tetrahydromethanopterin S-methyltransferase subunit A (240 aa).

Topologically, residues M1–K218 are cytoplasmic. H85 is a 5-hydroxybenzimidazolylcob(I)amide binding site. The helical transmembrane segment at V219–G239 threads the bilayer. R240 is a topological domain (extracellular).

This sequence belongs to the MtrA family. In terms of assembly, the complex is composed of 8 subunits; MtrA, MtrB, MtrC, MtrD, MtrE, MtrF, MtrG and MtrH. 5-hydroxybenzimidazolylcob(I)amide is required as a cofactor.

Its subcellular location is the cell membrane. It carries out the reaction 5-methyl-5,6,7,8-tetrahydromethanopterin + coenzyme M + 2 Na(+)(in) = 5,6,7,8-tetrahydromethanopterin + methyl-coenzyme M + 2 Na(+)(out). It participates in one-carbon metabolism; methanogenesis from CO(2); methyl-coenzyme M from 5,10-methylene-5,6,7,8-tetrahydromethanopterin: step 2/2. Its function is as follows. Part of a complex that catalyzes the formation of methyl-coenzyme M and tetrahydromethanopterin from coenzyme M and methyl-tetrahydromethanopterin. This is an energy-conserving, sodium-ion translocating step. This Methanosarcina mazei (strain ATCC BAA-159 / DSM 3647 / Goe1 / Go1 / JCM 11833 / OCM 88) (Methanosarcina frisia) protein is Tetrahydromethanopterin S-methyltransferase subunit A.